The chain runs to 482 residues: High affinity 3',5'-cyclic-AMP phosphodiesterase 7A (482 aa).

The residue at position 84 (S84) is a Phosphoserine. Positions L136–Q458 constitute a PDEase domain. Residue H212 is the Proton donor of the active site. The a divalent metal cation site is built by H216, H252, D253, and D362.

It belongs to the cyclic nucleotide phosphodiesterase family. PDE7 subfamily. Interacts with CBFA2T3. A divalent metal cation is required as a cofactor. Found at high levels in skeletal muscle and at low levels in a variety of tissues including brain and heart. It is expressed as well in two T-cell lines. In terms of tissue distribution, found abundantly in skeletal muscle and at low levels in heart.

It localises to the cytoplasm. Its subcellular location is the cytosol. The enzyme catalyses 3',5'-cyclic AMP + H2O = AMP + H(+). The protein operates within purine metabolism; 3',5'-cyclic AMP degradation; AMP from 3',5'-cyclic AMP: step 1/1. Its activity is regulated as follows. Insensitive to all selective PDE inhibitors. Its function is as follows. Hydrolyzes the second messenger cAMP, which is a key regulator of many important physiological processes. May have a role in muscle signal transduction. The sequence is that of High affinity 3',5'-cyclic-AMP phosphodiesterase 7A from Homo sapiens (Human).